The chain runs to 397 residues: Acetate kinase 2 (397 aa).

Asparagine 10 serves as a coordination point for Mg(2+). Lysine 17 is a binding site for ATP. Arginine 90 is a substrate binding site. Residue aspartate 147 is the Proton donor/acceptor of the active site. ATP is bound by residues 207 to 211 (HLGNG), 281 to 283 (DAR), and 329 to 333 (GIGEN). Glutamate 385 contributes to the Mg(2+) binding site.

This sequence belongs to the acetokinase family. As to quaternary structure, homodimer. Mg(2+) is required as a cofactor. It depends on Mn(2+) as a cofactor.

The protein localises to the cytoplasm. The catalysed reaction is acetate + ATP = acetyl phosphate + ADP. The protein operates within metabolic intermediate biosynthesis; acetyl-CoA biosynthesis; acetyl-CoA from acetate: step 1/2. Functionally, catalyzes the formation of acetyl phosphate from acetate and ATP. Can also catalyze the reverse reaction. This Vibrio cholerae serotype O1 (strain ATCC 39315 / El Tor Inaba N16961) protein is Acetate kinase 2.